Consider the following 310-residue polypeptide: Iron ABC transporter substrate-binding lipoprotein MtsA (310 aa).

Residues 1–20 form the signal peptide; the sequence is MGKKMSLILGAFLSVFLLVA. A lipid anchor (N-palmitoyl cysteine) is attached at cysteine 21. Cysteine 21 carries the S-diacylglycerol cysteine lipid modification. Positions 68, 140, 206, and 281 each coordinate Fe(2+).

The protein belongs to the bacterial solute-binding protein 9 family. Lipoprotein receptor antigen (Lrai) subfamily.

It localises to the cell membrane. In terms of biological role, part of the ATP-binding cassette (ABC) transport system MtsABC involved in iron import. Binds iron with high affinity and specificity and delivers it to the membrane permease for translocation into the cytoplasm. Has low affinity for Zn(2+) and Cu(2+). This Streptococcus pyogenes serotype M6 (strain ATCC BAA-946 / MGAS10394) protein is Iron ABC transporter substrate-binding lipoprotein MtsA (mtsA).